The chain runs to 292 residues: Malonyl-[acyl-carrier protein] O-methyltransferase (292 aa).

This sequence belongs to the methyltransferase superfamily.

It carries out the reaction malonyl-[ACP] + S-adenosyl-L-methionine = malonyl-[ACP] methyl ester + S-adenosyl-L-homocysteine. It functions in the pathway cofactor biosynthesis; biotin biosynthesis. Converts the free carboxyl group of a malonyl-thioester to its methyl ester by transfer of a methyl group from S-adenosyl-L-methionine (SAM). It allows to synthesize pimeloyl-ACP via the fatty acid synthetic pathway. This chain is Malonyl-[acyl-carrier protein] O-methyltransferase, found in Alcanivorax borkumensis (strain ATCC 700651 / DSM 11573 / NCIMB 13689 / SK2).